A 481-amino-acid chain; its full sequence is Aspartyl/glutamyl-tRNA(Asn/Gln) amidotransferase subunit B (481 aa).

Belongs to the GatB/GatE family. GatB subfamily. As to quaternary structure, heterotrimer of A, B and C subunits.

The enzyme catalyses L-glutamyl-tRNA(Gln) + L-glutamine + ATP + H2O = L-glutaminyl-tRNA(Gln) + L-glutamate + ADP + phosphate + H(+). It carries out the reaction L-aspartyl-tRNA(Asn) + L-glutamine + ATP + H2O = L-asparaginyl-tRNA(Asn) + L-glutamate + ADP + phosphate + 2 H(+). In terms of biological role, allows the formation of correctly charged Asn-tRNA(Asn) or Gln-tRNA(Gln) through the transamidation of misacylated Asp-tRNA(Asn) or Glu-tRNA(Gln) in organisms which lack either or both of asparaginyl-tRNA or glutaminyl-tRNA synthetases. The reaction takes place in the presence of glutamine and ATP through an activated phospho-Asp-tRNA(Asn) or phospho-Glu-tRNA(Gln). The sequence is that of Aspartyl/glutamyl-tRNA(Asn/Gln) amidotransferase subunit B from Ehrlichia chaffeensis (strain ATCC CRL-10679 / Arkansas).